The primary structure comprises 568 residues: MASPALISETEAWKDLKAHLEGIKMIHLRELMGDTERCQSMMVEFDNIFLDYSRQQASPDTISKLYKLADAAHLKQKIDRMYNGDHINSTENRSVLHVALRAPRNSAICSDGKNVVPDVWNVLDKIKDFSDRVRNGSWIGATGKELKDVIAVGIGGSFLGPLFVHTALQTDPEASKNARGRELRFLANVDPIDVARNISGLNPETTLVVVVSKTFTTAETMLNARTLREWISSALGPSAVAKHMVAVSTNLPLVEKFGIDPNNAFAFWDWVGGRYSVCSAVGVLPLSLQYGFAVVEKFLQGAHSIDQHFSSAPFEKNIPVLLGLLSVWNVSFLGYPARAILPYSQALEKLAPHIQQVSMESNGKGVSIDGLPLPFESGEIDFGEPGTNGQHSFYQLIHQGRVIPCDFIGIVKSQQPVYLKGEVVNNHDELMSNFFAQPDALAYGKTPEQLKNENVSEHLIPHKTFTGNRPSISILLPTLDAYRIGQLLAIYEHRVAVQGFVWGINSFDQWGVELGKSLATQVRKQLHASRVKGEPVEGFNFSTKTLLTRYLEATSDVPADPSTLLPNI.

E360 functions as the Proton donor in the catalytic mechanism. Active-site residues include H391 and K516.

It belongs to the GPI family. In terms of assembly, homodimer.

Its subcellular location is the cytoplasm. The enzyme catalyses alpha-D-glucose 6-phosphate = beta-D-fructose 6-phosphate. Its pathway is carbohydrate degradation; glycolysis; D-glyceraldehyde 3-phosphate and glycerone phosphate from D-glucose: step 2/4. This Clarkia xantiana (Gunsight clarkia) protein is Glucose-6-phosphate isomerase, cytosolic 1 (PGIC1).